The following is a 130-amino-acid chain: Small ribosomal subunit protein uS8 (130 aa).

This sequence belongs to the universal ribosomal protein uS8 family. Part of the 30S ribosomal subunit.

One of the primary rRNA binding proteins, it binds directly to 16S rRNA central domain where it helps coordinate assembly of the platform of the 30S subunit. This chain is Small ribosomal subunit protein uS8, found in Methanococcus voltae.